The chain runs to 192 residues: MHTMATALTLEPTALPSDAIEVGRIADAWGLQGWFKVQPYSADPEALFSCKRWYLQPAARGAKAFGGTVLLPIRQAKDHGGMVLAWAQDIDDRNTAEALRGARIFVPRSSFPSPPPGEYYWVDLIGLQVINRQGLALGQVRELRATGAQTLLVLAHEQDGKAGKRMIPFVPAFVDQVELPQKRIIVDWQPDY.

One can recognise a PRC barrel domain in the interval 116–192 (PGEYYWVDLI…RIIVDWQPDY (77 aa)).

It belongs to the RimM family. As to quaternary structure, binds ribosomal protein uS19.

The protein resides in the cytoplasm. In terms of biological role, an accessory protein needed during the final step in the assembly of 30S ribosomal subunit, possibly for assembly of the head region. Essential for efficient processing of 16S rRNA. May be needed both before and after RbfA during the maturation of 16S rRNA. It has affinity for free ribosomal 30S subunits but not for 70S ribosomes. This chain is Ribosome maturation factor RimM, found in Verminephrobacter eiseniae (strain EF01-2).